The primary structure comprises 483 residues: Regulatory protein ViaA (483 aa).

It belongs to the ViaA family. In terms of assembly, homodimer. Interacts with RavA.

It is found in the cytoplasm. Its function is as follows. Component of the RavA-ViaA chaperone complex, which may act on the membrane to optimize the function of some of the respiratory chains. ViaA stimulates the ATPase activity of RavA. The protein is Regulatory protein ViaA of Shigella boydii serotype 18 (strain CDC 3083-94 / BS512).